The following is a 312-amino-acid chain: Putative B3 domain-containing protein Os10g0537100 (312 aa).

A DNA-binding region (TF-B3) is located at residues 35 to 153; the sequence is FEKVVTPSDV…RLFIDFRRRR (119 aa). 2 disordered regions span residues 161–182 and 286–312; these read FPPT…HPPL and LLQL…DLGL. A compositionally biased stretch (basic residues) spans 170 to 180; the sequence is HSHHHHQRHHP. The segment covering 286–301 has biased composition (low complexity); that stretch reads LLQLPSPSSSTSSSTA.

It is found in the nucleus. This chain is Putative B3 domain-containing protein Os10g0537100, found in Oryza sativa subsp. japonica (Rice).